The sequence spans 288 residues: Bifunctional protein FolD (288 aa).

Residues 166–168 (GAS) and Ile-232 contribute to the NADP(+) site.

This sequence belongs to the tetrahydrofolate dehydrogenase/cyclohydrolase family. In terms of assembly, homodimer.

It carries out the reaction (6R)-5,10-methylene-5,6,7,8-tetrahydrofolate + NADP(+) = (6R)-5,10-methenyltetrahydrofolate + NADPH. The enzyme catalyses (6R)-5,10-methenyltetrahydrofolate + H2O = (6R)-10-formyltetrahydrofolate + H(+). Its pathway is one-carbon metabolism; tetrahydrofolate interconversion. Its function is as follows. Catalyzes the oxidation of 5,10-methylenetetrahydrofolate to 5,10-methenyltetrahydrofolate and then the hydrolysis of 5,10-methenyltetrahydrofolate to 10-formyltetrahydrofolate. The chain is Bifunctional protein FolD from Citrobacter koseri (strain ATCC BAA-895 / CDC 4225-83 / SGSC4696).